The chain runs to 935 residues: C-1-tetrahydrofolate synthase, cytoplasmic (935 aa).

The residue at position 1 (methionine 1) is an N-acetylmethionine. The methylenetetrahydrofolate dehydrogenase and methenyltetrahydrofolate cyclohydrolase (D/C) domain stretch occupies residues 2 to 291 (APAEILNGKE…MLMQSTVESA (290 aa)). Substrate-binding positions include 52–56 (YINVK) and 99–101 (VQL). Lysine 56 is an active-site residue. Residues 172-174 (GRS) and serine 197 contribute to the NADP(+) site. 272-276 (PGGVG) contacts substrate. The formyltetrahydrofolate synthetase domain stretch occupies residues 310-935 (LNLKTPVPSD…PETEQVNGLF (626 aa)). The residue at position 318 (serine 318) is a Phosphoserine. An ATP-binding site is contributed by 380–387 (TPLGEGKS). Residues serine 413 and serine 490 each carry the phosphoserine modification.

This sequence in the N-terminal section; belongs to the tetrahydrofolate dehydrogenase/cyclohydrolase family. It in the C-terminal section; belongs to the formate--tetrahydrofolate ligase family. In terms of assembly, homodimer. In terms of tissue distribution, ubiquitous.

The protein localises to the cytoplasm. The enzyme catalyses (6R)-5,10-methylene-5,6,7,8-tetrahydrofolate + NADP(+) = (6R)-5,10-methenyltetrahydrofolate + NADPH. It catalyses the reaction (6R)-5,10-methenyltetrahydrofolate + H2O = (6R)-10-formyltetrahydrofolate + H(+). It carries out the reaction (6S)-5,6,7,8-tetrahydrofolate + formate + ATP = (6R)-10-formyltetrahydrofolate + ADP + phosphate. Its pathway is one-carbon metabolism; tetrahydrofolate interconversion. In terms of biological role, trifunctional enzyme that catalyzes the interconversion of three forms of one-carbon-substituted tetrahydrofolate: (6R)-5,10-methylene-5,6,7,8-tetrahydrofolate, 5,10-methenyltetrahydrofolate and (6S)-10-formyltetrahydrofolate. These derivatives of tetrahydrofolate are differentially required in nucleotide and amino acid biosynthesis, (6S)-10-formyltetrahydrofolate being required for purine biosynthesis while (6R)-5,10-methylene-5,6,7,8-tetrahydrofolate is used for serine and methionine biosynthesis for instance. The chain is C-1-tetrahydrofolate synthase, cytoplasmic (MTHFD1) from Homo sapiens (Human).